A 546-amino-acid chain; its full sequence is Chaperonin GroEL (546 aa).

ATP-binding positions include 29-32 (TLGP), Lys-50, 86-90 (DGTTT), Gly-414, 477-479 (NAL), and Asp-493. The disordered stretch occupies residues 522–546 (KPEKDAPNPMAGMGGGGMGGMGGMM). Residues 533–546 (GMGGGGMGGMGGMM) show a composition bias toward gly residues.

It belongs to the chaperonin (HSP60) family. Forms a cylinder of 14 subunits composed of two heptameric rings stacked back-to-back. Interacts with the co-chaperonin GroES.

It localises to the cytoplasm. It catalyses the reaction ATP + H2O + a folded polypeptide = ADP + phosphate + an unfolded polypeptide.. In terms of biological role, together with its co-chaperonin GroES, plays an essential role in assisting protein folding. The GroEL-GroES system forms a nano-cage that allows encapsulation of the non-native substrate proteins and provides a physical environment optimized to promote and accelerate protein folding. This Leptospira borgpetersenii serovar Hardjo-bovis (strain JB197) protein is Chaperonin GroEL.